The following is a 377-amino-acid chain: Probable pectin lyase D (377 aa).

Positions 1-17 (MRVSAFALLAAAATAAA) are cleaved as a signal peptide. 2 disulfide bridges follow: Cys-80–Cys-99 and Cys-89–Cys-223. An N-linked (GlcNAc...) asparagine glycan is attached at Asn-126. Arg-253 is an active-site residue. An intrachain disulfide couples Cys-321 to Cys-329.

This sequence belongs to the polysaccharide lyase 1 family.

The protein resides in the secreted. It catalyses the reaction Eliminative cleavage of (1-&gt;4)-alpha-D-galacturonan methyl ester to give oligosaccharides with 4-deoxy-6-O-methyl-alpha-D-galact-4-enuronosyl groups at their non-reducing ends.. In terms of biological role, pectinolytic enzymes consist of four classes of enzymes: pectin lyase, polygalacturonase, pectin methylesterase and rhamnogalacturonase. Among pectinolytic enzymes, pectin lyase is the most important in depolymerization of pectin, since it cleaves internal glycosidic bonds of highly methylated pectins. This is Probable pectin lyase D (pelD) from Emericella nidulans (strain FGSC A4 / ATCC 38163 / CBS 112.46 / NRRL 194 / M139) (Aspergillus nidulans).